Consider the following 171-residue polypeptide: Co-chaperone protein HscB (171 aa).

In terms of domain architecture, J spans 2–74 (DYFTLFGLPA…LTRAEYLLSL (73 aa)).

Belongs to the HscB family. Interacts with HscA and stimulates its ATPase activity. Interacts with IscU.

Its function is as follows. Co-chaperone involved in the maturation of iron-sulfur cluster-containing proteins. Seems to help targeting proteins to be folded toward HscA. This is Co-chaperone protein HscB from Salmonella paratyphi A (strain AKU_12601).